Here is a 488-residue protein sequence, read N- to C-terminus: MIQVLLVTICLAVFPYQGSSIILESGNVNDYEVVYPQKVPALPKRAVQQKYEDAMQYEFKVNGEPVVLHLEKNKGLFSEDYSETHYSPDGREITTYPPVEDHCYYHGRIENDADSTTSISACNGLKGHFKLQGETYFIESLKLPDSEAHAVFKYENVEKEDGAPKMCGVTQNWESYEPVKKASQLNFPPDGRIEFLQRYIELVIVADHRMYTKYDGDKTEISSIIYEIVNILTQNYRPMHIRVALTGLEIWSSGELSNVTLSADDTLDSFGEWRERDLLNRKRHDNAQSLTGMIFSENIEGRAYKESMCDLKRSVGIVRDYRTRRHFVANIMAHEMGHNLGIDHDRDSCTCDASSCIMSATVSNEPSSRFSDCSLNQYLSDIIHNPLASYCLYNEPSKTDIVSPPVCGNYYLEVGEDCDCGPPANCQNPCCDAATCRLTPGSQCAEGLCCEQCSFMKEGTVCRIARGDDLDDYCNGISAGCPRNPSHA.

Residues methionine 1 to serine 20 form the signal peptide. The propeptide occupies isoleucine 21–phenylalanine 195. Residues arginine 198–asparagine 394 form the Peptidase M12B domain. Glutamate 201 lines the Ca(2+) pocket. Asparagine 258 carries N-linked (GlcNAc...) asparagine glycosylation. A Ca(2+)-binding site is contributed by aspartate 285. Cystine bridges form between cysteine 309-cysteine 391, cysteine 349-cysteine 373, and cysteine 351-cysteine 356. Position 334 (histidine 334) interacts with Zn(2+). Glutamate 335 is an active-site residue. Histidine 338 and histidine 344 together coordinate Zn(2+). Ca(2+) contacts are provided by cysteine 391, asparagine 394, valine 406, asparagine 409, glutamate 413, glutamate 416, and aspartate 419. One can recognise a Disintegrin domain in the interval proline 404 to alanine 488. Intrachain disulfides connect cysteine 407–cysteine 426, cysteine 418–cysteine 436, cysteine 420–cysteine 431, cysteine 430–cysteine 453, cysteine 444–cysteine 450, cysteine 449–cysteine 474, and cysteine 462–cysteine 481. The Cell attachment site signature appears at arginine 466–aspartate 468.

The protein belongs to the venom metalloproteinase (M12B) family. P-II subfamily. P-IIb sub-subfamily. Monomer. Requires Zn(2+) as cofactor. Expressed by the venom gland.

The protein resides in the secreted. In terms of biological role, inhibits ADP-induced human platelet aggregation, inhibits bovine aortic endothelial cells (BAEC) migration, has anti-angiogenic activity and induces BAEC and human micro-vascular endothelial cell (HMEC) apoptosis. The metalloproteinase domain may act in hemorrhage. The protein is Zinc metalloproteinase-disintegrin agkistin of Gloydius halys (Chinese water mocassin).